Reading from the N-terminus, the 156-residue chain is Small ribosomal subunit protein uS7 (156 aa).

Belongs to the universal ribosomal protein uS7 family. In terms of assembly, part of the 30S ribosomal subunit. Contacts proteins S9 and S11.

One of the primary rRNA binding proteins, it binds directly to 16S rRNA where it nucleates assembly of the head domain of the 30S subunit. Is located at the subunit interface close to the decoding center, probably blocks exit of the E-site tRNA. This chain is Small ribosomal subunit protein uS7, found in Dehalococcoides mccartyi (strain ATCC BAA-2100 / JCM 16839 / KCTC 5957 / BAV1).